The primary structure comprises 433 residues: 3-deoxy-D-manno-octulosonic acid transferase (433 aa).

Residues Thr-11 to Tyr-31 traverse the membrane as a helical; Signal-anchor segment. The active-site Proton acceptor is Glu-70. CMP-binding positions include Pro-277–Arg-278, Ile-317–Trp-319, and Asn-344–Glu-347.

It belongs to the glycosyltransferase group 1 family. Glycosyltransferase 30 subfamily.

It localises to the cell inner membrane. The enzyme catalyses lipid IVA (E. coli) + CMP-3-deoxy-beta-D-manno-octulosonate = alpha-Kdo-(2-&gt;6)-lipid IVA (E. coli) + CMP + H(+). The catalysed reaction is alpha-Kdo-(2-&gt;6)-lipid IVA (E. coli) + CMP-3-deoxy-beta-D-manno-octulosonate = alpha-Kdo-(2-&gt;4)-alpha-Kdo-(2-&gt;6)-lipid IVA (E. coli) + CMP + H(+). It catalyses the reaction alpha-Kdo-(2-&gt;4)-alpha-Kdo-(2-&gt;6)-lipid IVA (E. coli) + CMP-3-deoxy-beta-D-manno-octulosonate = alpha-Kdo-(2-&gt;8)-alpha-Kdo-(2-&gt;4)-alpha-Kdo-(2-&gt;6)-lipid IVA (E. coli) + CMP + H(+). It carries out the reaction alpha-Kdo-(2-&gt;8)-alpha-Kdo-(2-&gt;4)-alpha-Kdo-(2-&gt;6)-lipid IVA (E. coli) + CMP-3-deoxy-beta-D-manno-octulosonate = alpha-Kdo-(2-&gt;8)-[alpha-Kdo-(2-&gt;4)]-alpha-Kdo-(2-&gt;4)-alpha-Kdo-(2-&gt;6)-lipid IVA + CMP + H(+). Its pathway is bacterial outer membrane biogenesis; LPS core biosynthesis. Its function is as follows. Involved in lipopolysaccharide (LPS) biosynthesis. Catalyzes the transfer of predominantly four 3-deoxy-D-manno-octulosonate (Kdo) residues from CMP-Kdo to lipid IV(A), the tetraacyldisaccharide-1,4'-bisphosphate precursor of lipid A. Thus generates the genus-specific LPS epitope of Chlamydia, composed of the trisaccharide alpha-Kdo-(2-&gt;8)-alpha-Kdo-(2-&gt;4)-alpha-Kdo. The protein is 3-deoxy-D-manno-octulosonic acid transferase (waaA) of Chlamydophila psittaci (strain ATCC VR-125 / 6BC) (Chlamydia psittaci).